The primary structure comprises 426 residues: DNA primase DnaG (426 aa).

The 77-residue stretch at 165-241 folds into the Toprim domain; sequence DEIIIVEGRA…DIDYVAKAPP (77 aa). Residues glutamate 171, aspartate 215, and aspartate 217 each contribute to the Mg(2+) site. A disordered region spans residues 278 to 298; the sequence is PAVEERPQPPQPQPPAVQPVQ. Over residues 285–294 the composition is skewed to pro residues; the sequence is QPPQPQPPAV.

The protein belongs to the archaeal DnaG primase family. In terms of assembly, forms a ternary complex with MCM helicase and DNA. Component of the archaeal exosome complex. It depends on Mg(2+) as a cofactor.

It catalyses the reaction ssDNA + n NTP = ssDNA/pppN(pN)n-1 hybrid + (n-1) diphosphate.. Its function is as follows. RNA polymerase that catalyzes the synthesis of short RNA molecules used as primers for DNA polymerase during DNA replication. Also part of the exosome, which is a complex involved in RNA degradation. Acts as a poly(A)-binding protein that enhances the interaction between heteromeric, adenine-rich transcripts and the exosome. In Hyperthermus butylicus (strain DSM 5456 / JCM 9403 / PLM1-5), this protein is DNA primase DnaG.